Consider the following 210-residue polypeptide: ATP-dependent Clp protease proteolytic subunit (210 aa).

The Nucleophile role is filled by serine 106. Histidine 131 is a catalytic residue.

The protein belongs to the peptidase S14 family. Fourteen ClpP subunits assemble into 2 heptameric rings which stack back to back to give a disk-like structure with a central cavity, resembling the structure of eukaryotic proteasomes.

The protein resides in the cytoplasm. The catalysed reaction is Hydrolysis of proteins to small peptides in the presence of ATP and magnesium. alpha-casein is the usual test substrate. In the absence of ATP, only oligopeptides shorter than five residues are hydrolyzed (such as succinyl-Leu-Tyr-|-NHMec, and Leu-Tyr-Leu-|-Tyr-Trp, in which cleavage of the -Tyr-|-Leu- and -Tyr-|-Trp bonds also occurs).. Cleaves peptides in various proteins in a process that requires ATP hydrolysis. Has a chymotrypsin-like activity. Plays a major role in the degradation of misfolded proteins. This chain is ATP-dependent Clp protease proteolytic subunit, found in Azospirillum brasilense.